The primary structure comprises 276 residues: Orotidine 5'-phosphate decarboxylase (276 aa).

The active-site Proton donor is Lys93.

This sequence belongs to the OMP decarboxylase family. Type 2 subfamily.

It catalyses the reaction orotidine 5'-phosphate + H(+) = UMP + CO2. Its pathway is pyrimidine metabolism; UMP biosynthesis via de novo pathway; UMP from orotate: step 2/2. This is Orotidine 5'-phosphate decarboxylase from Halorubrum lacusprofundi (strain ATCC 49239 / DSM 5036 / JCM 8891 / ACAM 34).